The chain runs to 427 residues: Trigger factor (427 aa).

A PPIase FKBP-type domain is found at 163–248 (GDTVVIDFVG…IHEVKTKEVP (86 aa)).

It belongs to the FKBP-type PPIase family. Tig subfamily.

The protein resides in the cytoplasm. The catalysed reaction is [protein]-peptidylproline (omega=180) = [protein]-peptidylproline (omega=0). Involved in protein export. Acts as a chaperone by maintaining the newly synthesized protein in an open conformation. Functions as a peptidyl-prolyl cis-trans isomerase. The protein is Trigger factor of Streptococcus pyogenes serotype M49 (strain NZ131).